A 328-amino-acid chain; its full sequence is Beta-ketoacyl-[acyl-carrier-protein] synthase III (328 aa).

Residues cysteine 122 and histidine 255 contribute to the active site. The interval 256-260 is ACP-binding; that stretch reads QANIR. Asparagine 285 is an active-site residue.

Belongs to the thiolase-like superfamily. FabH family. Homodimer.

It is found in the cytoplasm. It carries out the reaction malonyl-[ACP] + acetyl-CoA + H(+) = 3-oxobutanoyl-[ACP] + CO2 + CoA. It functions in the pathway lipid metabolism; fatty acid biosynthesis. Catalyzes the condensation reaction of fatty acid synthesis by the addition to an acyl acceptor of two carbons from malonyl-ACP. Catalyzes the first condensation reaction which initiates fatty acid synthesis and may therefore play a role in governing the total rate of fatty acid production. Possesses both acetoacetyl-ACP synthase and acetyl transacylase activities. Its substrate specificity determines the biosynthesis of branched-chain and/or straight-chain of fatty acids. The protein is Beta-ketoacyl-[acyl-carrier-protein] synthase III of Janthinobacterium sp. (strain Marseille) (Minibacterium massiliensis).